The following is a 981-amino-acid chain: Polyhomeotic-like protein 3 (981 aa).

Residues 1–28 (MDSEPSSGTSVSTTASSTTTTTITTSSS) show a composition bias toward low complexity. Disordered stretches follow at residues 1–33 (MDSEPSSGTSVSTTASSTTTTTITTSSSRMQQP), 102–127 (LSSGRPSTSPTGSVTQQSSMSQTSIL), 224–280 (LSSS…TAVT), and 307–407 (QIPL…SQSP). Over residues 224–255 (LSSSQNGSPKSAGQTQSLTICHNKTTVTSSKI) the composition is skewed to polar residues. 4 positions are modified to phosphoserine: Ser231, Ser261, Ser269, and Ser312. Basic and acidic residues predominate over residues 256 to 266 (SQRDPSPESKK). Over residues 321 to 340 (QLLLQQQQQQIQPITLQSPS) the composition is skewed to low complexity. Polar residues predominate over residues 360-373 (APSNAQPQHCSPVQ). The span at 381–395 (VSPNQAQSAQQSVVV) shows a compositional bias: low complexity. Phosphothreonine occurs at positions 607 and 612. Phosphoserine is present on Ser614. The disordered stretch occupies residues 650-690 (KSPSDPTHASAPAPPLLIPAASTRSSSTSLASSTPSLENKP). The segment covering 667–686 (IPAASTRSSSTSLASSTPSL) has biased composition (low complexity). Glycyl lysine isopeptide (Lys-Gly) (interchain with G-Cter in SUMO2) cross-links involve residues Lys689 and Lys730. The HD1 motif lies at 689–718 (KPPQAIVKPQILTHVIEGFVIQEGLEPFPV). A phosphoserine mark is found at Ser759 and Ser760. Residues 774–808 (EEMDSELLKCEFCGKMGYPNEFLRSKRFCTMSCAK) form an FCS-type zinc finger. Residues Cys783, Cys786, Cys802, and Cys806 each contribute to the Zn(2+) site. Residue Lys808 forms a Glycyl lysine isopeptide (Lys-Gly) (interchain with G-Cter in SUMO2) linkage. 2 disordered regions span residues 825 to 844 (RKPDNQSLGHRGRRPSGPEG) and 863 to 888 (EDVASHEDPVPSAMTTRLRRQSERER). One can recognise an SAM domain in the interval 917 to 981 (WTVDDVWAFI…CARINSLKDS (65 aa)).

As to quaternary structure, component of a PRC1-like complex. In terms of tissue distribution, ubiquitous expression.

The protein resides in the nucleus. Component of a Polycomb group (PcG) multiprotein PRC1-like complex, a complex class required to maintain the transcriptionally repressive state of many genes, including Hox genes, throughout development. PcG PRC1 complex acts via chromatin remodeling and modification of histones; it mediates monoubiquitination of histone H2A 'Lys-119', rendering chromatin heritably changed in its expressibility. This is Polyhomeotic-like protein 3 (Phc3) from Mus musculus (Mouse).